The following is a 400-amino-acid chain: Protein transport protein HofC homolog (400 aa).

A run of 3 helical transmembrane segments spans residues 165–185 (YPIIILAMAIMVVVAMLHFVL), 209–229 (LADFSGEWSWLLVLFGFLLAI), and 370–390 (LLIITGGIIGTLVVAMYLPIF).

It belongs to the GSP F family.

It is found in the cell inner membrane. This chain is Protein transport protein HofC homolog (hofC), found in Escherichia coli (strain K12).